Reading from the N-terminus, the 525-residue chain is Acetyl-CoA hydrolase (525 aa).

280-284 (GIGNI) is a CoA binding site. The active-site 5-glutamyl coenzyme A thioester intermediate is the E305. Positions 395 and 399 each coordinate CoA.

Belongs to the acetyl-CoA hydrolase/transferase family.

It is found in the cytoplasm. The enzyme catalyses acetyl-CoA + H2O = acetate + CoA + H(+). Functionally, required for utilization of acetate. This chain is Acetyl-CoA hydrolase (acu-8), found in Neurospora crassa (strain ATCC 24698 / 74-OR23-1A / CBS 708.71 / DSM 1257 / FGSC 987).